The following is a 516-amino-acid chain: Exodeoxyribonuclease 7 large subunit (516 aa).

It belongs to the XseA family. Heterooligomer composed of large and small subunits.

It is found in the cytoplasm. The enzyme catalyses Exonucleolytic cleavage in either 5'- to 3'- or 3'- to 5'-direction to yield nucleoside 5'-phosphates.. Functionally, bidirectionally degrades single-stranded DNA into large acid-insoluble oligonucleotides, which are then degraded further into small acid-soluble oligonucleotides. This is Exodeoxyribonuclease 7 large subunit from Chlamydia trachomatis serovar A (strain ATCC VR-571B / DSM 19440 / HAR-13).